Here is a 323-residue protein sequence, read N- to C-terminus: Transcription factor MYB56 (323 aa).

The span at 1 to 14 (MNPNLLEKDLRGKE) shows a compositional bias: basic and acidic residues. Residues 1-84 (MNPNLLEKDL…EKSLRMRGKS (84 aa)) form a disordered region. The segment covering 27 to 60 (NFRSLPNSHTAACKTSLNNPSISRNHPHNKSASV) has biased composition (polar residues). A compositionally biased stretch (basic and acidic residues) spans 66 to 78 (EHGNERGENEKSL). HTH myb-type domains follow at residues 88 to 139 (TKVC…FNQL) and 140 to 194 (DPRI…ARRT). 2 consecutive DNA-binding regions (H-T-H motif) follow at residues 116–138 (WNLI…WFNQ) and 167–190 (WALI…HVIM). Positions 192 to 217 (RRTRESQRQRQQPPPTLSRDAEMTVS) are disordered.

Forms homodimer. Interacts with the dephosphorylated active form of BES1 in the nucleus of quiescent center (QC) cells. Interacts with BPM1, BPM2, BPM3, BPM4, BPM5 and BPM6 at the promoter of FLOWERING LOCUS T (FT). In terms of tissue distribution, mostly expressed in flowers (at protein level) and siliques, and, to a lower extent, in roots, stems and leaves. Expressed in embryos (e.g. heart and torpedo stages) and cotyledons, and, at low levels, in roots and inflorescence. Accumulates specifically in root apical meristem quiescent center (QC) and vascular initial cells.

The protein resides in the nucleus. Its subcellular location is the cytoplasm. The protein localises to the cytosol. In terms of biological role, acts as a cell-specific local repressor of quiescent center (QC) self-renewal by cell divisions in the primary root. Counteracts brassinosteroid (BR)-mediated cell division in the QC cells. Regulates maternally seed size, especially before the heart stage, promoting both endothelial cells expansion and cell number in the outer integument layer of the seed coat. Modulates the expression of genes involved in cell wall metabolism such as cell division and expansion. Negative regulator of flowering via the repression of FT transcription. The protein is Transcription factor MYB56 of Arabidopsis thaliana (Mouse-ear cress).